The primary structure comprises 332 residues: Ketol-acid reductoisomerase (NADP(+)) (332 aa).

One can recognise a KARI N-terminal Rossmann domain in the interval 1-182 (MATIYYEKDA…GCTRAGVLAT (182 aa)). NADP(+)-binding positions include 25–28 (YGSQ), arginine 48, serine 53, and 83–86 (DELQ). Histidine 108 is a catalytic residue. Glycine 134 is an NADP(+) binding site. In terms of domain architecture, KARI C-terminal knotted spans 183 to 328 (TFKEETETDL…KELRSMMPWL (146 aa)). Residues aspartate 191, glutamate 195, glutamate 227, and glutamate 231 each coordinate Mg(2+). Residue serine 252 coordinates substrate.

This sequence belongs to the ketol-acid reductoisomerase family. Mg(2+) is required as a cofactor.

It catalyses the reaction (2R)-2,3-dihydroxy-3-methylbutanoate + NADP(+) = (2S)-2-acetolactate + NADPH + H(+). It carries out the reaction (2R,3R)-2,3-dihydroxy-3-methylpentanoate + NADP(+) = (S)-2-ethyl-2-hydroxy-3-oxobutanoate + NADPH + H(+). The protein operates within amino-acid biosynthesis; L-isoleucine biosynthesis; L-isoleucine from 2-oxobutanoate: step 2/4. It participates in amino-acid biosynthesis; L-valine biosynthesis; L-valine from pyruvate: step 2/4. Its function is as follows. Involved in the biosynthesis of branched-chain amino acids (BCAA). Catalyzes an alkyl-migration followed by a ketol-acid reduction of (S)-2-acetolactate (S2AL) to yield (R)-2,3-dihydroxy-isovalerate. In the isomerase reaction, S2AL is rearranged via a Mg-dependent methyl migration to produce 3-hydroxy-3-methyl-2-ketobutyrate (HMKB). In the reductase reaction, this 2-ketoacid undergoes a metal-dependent reduction by NADPH to yield (R)-2,3-dihydroxy-isovalerate. This is Ketol-acid reductoisomerase (NADP(+)) from Methanocella arvoryzae (strain DSM 22066 / NBRC 105507 / MRE50).